Consider the following 388-residue polypeptide: GTPase Obg (388 aa).

Residues 1 to 159 (MKFVDEANIR…RSIKLELLLL (159 aa)) enclose the Obg domain. The OBG-type G domain maps to 160-333 (ADVGLLGMPN…LSIKMLDYIR (174 aa)). Residues 166-173 (GMPNAGKS), 191-195 (FTTLV), 213-216 (DIPG), 283-286 (NKTD), and 314-316 (SAY) contribute to the GTP site. Positions 173 and 193 each coordinate Mg(2+).

The protein belongs to the TRAFAC class OBG-HflX-like GTPase superfamily. OBG GTPase family. Monomer. It depends on Mg(2+) as a cofactor.

The protein localises to the cytoplasm. In terms of biological role, an essential GTPase which binds GTP, GDP and possibly (p)ppGpp with moderate affinity, with high nucleotide exchange rates and a fairly low GTP hydrolysis rate. Plays a role in control of the cell cycle, stress response, ribosome biogenesis and in those bacteria that undergo differentiation, in morphogenesis control. The protein is GTPase Obg of Shewanella frigidimarina (strain NCIMB 400).